We begin with the raw amino-acid sequence, 463 residues long: Ribosomal protein uS12 methylthiotransferase RimO (463 aa).

Positions methionine 1–arginine 26 are disordered. Low complexity predominate over residues proline 8–proline 19. Positions proline 30–proline 140 constitute an MTTase N-terminal domain. [4Fe-4S] cluster is bound by residues cysteine 39, cysteine 75, cysteine 104, cysteine 171, cysteine 175, and cysteine 178. In terms of domain architecture, Radical SAM core spans leucine 157–alanine 395. In terms of domain architecture, TRAM spans alanine 398–leucine 463.

It belongs to the methylthiotransferase family. RimO subfamily. Requires [4Fe-4S] cluster as cofactor.

It is found in the cytoplasm. It carries out the reaction L-aspartate(89)-[ribosomal protein uS12]-hydrogen + (sulfur carrier)-SH + AH2 + 2 S-adenosyl-L-methionine = 3-methylsulfanyl-L-aspartate(89)-[ribosomal protein uS12]-hydrogen + (sulfur carrier)-H + 5'-deoxyadenosine + L-methionine + A + S-adenosyl-L-homocysteine + 2 H(+). In terms of biological role, catalyzes the methylthiolation of an aspartic acid residue of ribosomal protein uS12. This Paracoccus denitrificans (strain Pd 1222) protein is Ribosomal protein uS12 methylthiotransferase RimO.